The following is a 163-amino-acid chain: Large ribosomal subunit protein bL17 (163 aa).

Residues 123 to 135 (AEASRATRASASK) show a composition bias toward low complexity. The disordered stretch occupies residues 123-163 (AEASRATRASASKKAAEEAETEEVVEAPAEETATEEAAEEK). Positions 140 to 163 (EAETEEVVEAPAEETATEEAAEEK) are enriched in acidic residues.

This sequence belongs to the bacterial ribosomal protein bL17 family. As to quaternary structure, part of the 50S ribosomal subunit. Contacts protein L32.

The chain is Large ribosomal subunit protein bL17 from Corynebacterium glutamicum (strain ATCC 13032 / DSM 20300 / JCM 1318 / BCRC 11384 / CCUG 27702 / LMG 3730 / NBRC 12168 / NCIMB 10025 / NRRL B-2784 / 534).